Consider the following 597-residue polypeptide: Arginine--tRNA ligase (597 aa).

Positions 125–135 match the 'HIGH' region motif; the sequence is PNTNKPLHLGH.

This sequence belongs to the class-I aminoacyl-tRNA synthetase family. In terms of assembly, monomer.

The protein localises to the cytoplasm. The catalysed reaction is tRNA(Arg) + L-arginine + ATP = L-arginyl-tRNA(Arg) + AMP + diphosphate. This is Arginine--tRNA ligase from Bacteroides fragilis (strain ATCC 25285 / DSM 2151 / CCUG 4856 / JCM 11019 / LMG 10263 / NCTC 9343 / Onslow / VPI 2553 / EN-2).